The sequence spans 422 residues: Protein MANNAN SYNTHESIS-RELATED 1 (422 aa).

Over 1-6 the chain is Cytoplasmic; sequence MGVDLR. The helical; Signal-anchor for type II membrane protein transmembrane segment at 7-26 threads the bilayer; sequence QVVAGILTITMFVMLGQMLH. Over 27-422 the chain is Lumenal; sequence RDYFDSLQEK…KNHLAYSCFC (396 aa). 263-265 contacts substrate; that stretch reads DLR.

Belongs to the glycosyltransferase GT106 family. In terms of tissue distribution, widely expressed.

The protein localises to the golgi apparatus membrane. The protein operates within glycan biosynthesis. Functionally, glycosyltransferase involved in mannan biosynthesis. The protein is Protein MANNAN SYNTHESIS-RELATED 1 of Arabidopsis thaliana (Mouse-ear cress).